The sequence spans 124 residues: Non-structural protein 2 (124 aa).

The DLNP; interaction with MAP1B signature appears at 121-124 (DLNP).

This sequence belongs to the pneumovirus non-structural protein 2 family. In terms of assembly, monomer (instable). Homomultimer. Heteromultimer with NS1. Interacts with host RIGI (via N-terminus); this interaction prevents host signaling pathway involved in interferon production. Interacts with host MAP1B/microtubule-associated protein 1B.

It is found in the host mitochondrion. Its function is as follows. Plays a major role in antagonizing the type I IFN-mediated antiviral response. Acts cooperatively with NS1 to repress activation and nuclear translocation of host IFN-regulatory factor IRF3. Interacts with the host cytoplasmic sensor of viral nucleic acids RIGI and prevents the interaction with its downstream partner MAVS. Together with NS2, participates in the proteasomal degradation of host STAT2, IRF3, IRF7, TBK1 and RIGI through a NS-degradasome involving CUL2 and Elongin-C. The degradasome requires an intact mitochondrial MAVS. Induces host SOCS1 expression. Induces activation of NF-kappa-B. Suppresses premature apoptosis by an NF-kappa-B-dependent, interferon-independent mechanism promoting continued viral replication. The chain is Non-structural protein 2 (1B) from Homo sapiens (Human).